Here is a 458-residue protein sequence, read N- to C-terminus: UDP-N-acetylmuramoylalanine--D-glutamate ligase (458 aa).

124–130 lines the ATP pocket; sequence GSDGKTT.

Belongs to the MurCDEF family.

The protein resides in the cytoplasm. The catalysed reaction is UDP-N-acetyl-alpha-D-muramoyl-L-alanine + D-glutamate + ATP = UDP-N-acetyl-alpha-D-muramoyl-L-alanyl-D-glutamate + ADP + phosphate + H(+). It functions in the pathway cell wall biogenesis; peptidoglycan biosynthesis. Functionally, cell wall formation. Catalyzes the addition of glutamate to the nucleotide precursor UDP-N-acetylmuramoyl-L-alanine (UMA). The polypeptide is UDP-N-acetylmuramoylalanine--D-glutamate ligase (Clostridium botulinum (strain Loch Maree / Type A3)).